The primary structure comprises 199 residues: Peroxynitrite isomerase (199 aa).

The GXWXGXG motif lies at 21–27 (GEWEGRG). A heme b-binding site is contributed by H190.

This sequence belongs to the nitrobindin family. As to quaternary structure, homodimer. Heme b serves as cofactor.

It carries out the reaction peroxynitrite = nitrate. It functions in the pathway nitrogen metabolism. Functionally, heme-binding protein able to scavenge peroxynitrite and to protect free L-tyrosine against peroxynitrite-mediated nitration, by acting as a peroxynitrite isomerase that converts peroxynitrite to nitrate. Therefore, this protein likely plays a role in peroxynitrite sensing and in the detoxification of reactive nitrogen and oxygen species (RNS and ROS, respectively). Is able to bind nitric oxide (NO) in vitro, but may act as a sensor of peroxynitrite levels in vivo. The polypeptide is Peroxynitrite isomerase (Paenarthrobacter aurescens (strain TC1)).